We begin with the raw amino-acid sequence, 316 residues long: 4-hydroxy-3-methylbut-2-enyl diphosphate reductase (316 aa).

Residue C12 participates in [4Fe-4S] cluster binding. (2E)-4-hydroxy-3-methylbut-2-enyl diphosphate contacts are provided by H43 and H81. Dimethylallyl diphosphate-binding residues include H43 and H81. Isopentenyl diphosphate-binding residues include H43 and H81. C103 serves as a coordination point for [4Fe-4S] cluster. H131 serves as a coordination point for (2E)-4-hydroxy-3-methylbut-2-enyl diphosphate. H131 serves as a coordination point for dimethylallyl diphosphate. An isopentenyl diphosphate-binding site is contributed by H131. The active-site Proton donor is the E133. Position 170 (T170) interacts with (2E)-4-hydroxy-3-methylbut-2-enyl diphosphate. C198 is a [4Fe-4S] cluster binding site. S226, N228, and S271 together coordinate (2E)-4-hydroxy-3-methylbut-2-enyl diphosphate. The dimethylallyl diphosphate site is built by S226, N228, and S271. Positions 226, 228, and 271 each coordinate isopentenyl diphosphate.

The protein belongs to the IspH family. It depends on [4Fe-4S] cluster as a cofactor.

The enzyme catalyses isopentenyl diphosphate + 2 oxidized [2Fe-2S]-[ferredoxin] + H2O = (2E)-4-hydroxy-3-methylbut-2-enyl diphosphate + 2 reduced [2Fe-2S]-[ferredoxin] + 2 H(+). The catalysed reaction is dimethylallyl diphosphate + 2 oxidized [2Fe-2S]-[ferredoxin] + H2O = (2E)-4-hydroxy-3-methylbut-2-enyl diphosphate + 2 reduced [2Fe-2S]-[ferredoxin] + 2 H(+). The protein operates within isoprenoid biosynthesis; dimethylallyl diphosphate biosynthesis; dimethylallyl diphosphate from (2E)-4-hydroxy-3-methylbutenyl diphosphate: step 1/1. It participates in isoprenoid biosynthesis; isopentenyl diphosphate biosynthesis via DXP pathway; isopentenyl diphosphate from 1-deoxy-D-xylulose 5-phosphate: step 6/6. Catalyzes the conversion of 1-hydroxy-2-methyl-2-(E)-butenyl 4-diphosphate (HMBPP) into a mixture of isopentenyl diphosphate (IPP) and dimethylallyl diphosphate (DMAPP). Acts in the terminal step of the DOXP/MEP pathway for isoprenoid precursor biosynthesis. The chain is 4-hydroxy-3-methylbut-2-enyl diphosphate reductase from Bacillus anthracis (strain A0248).